Reading from the N-terminus, the 769-residue chain is Polyribonucleotide nucleotidyltransferase (769 aa).

Residues D490 and D496 each contribute to the Mg(2+) site. One can recognise a KH domain in the interval P557–I616. The region spanning G626–R694 is the S1 motif domain. The span at P700–N734 shows a compositional bias: basic and acidic residues. The disordered stretch occupies residues P700–E769. The segment covering N736 to S746 has biased composition (low complexity). Positions F747–E769 are enriched in basic and acidic residues.

It belongs to the polyribonucleotide nucleotidyltransferase family. It depends on Mg(2+) as a cofactor.

It is found in the cytoplasm. The enzyme catalyses RNA(n+1) + phosphate = RNA(n) + a ribonucleoside 5'-diphosphate. Functionally, involved in mRNA degradation. Catalyzes the phosphorolysis of single-stranded polyribonucleotides processively in the 3'- to 5'-direction. The sequence is that of Polyribonucleotide nucleotidyltransferase from Lactococcus lactis subsp. cremoris (strain SK11).